The sequence spans 131 residues: Large ribosomal subunit protein bL19 (131 aa).

The protein belongs to the bacterial ribosomal protein bL19 family.

Its function is as follows. This protein is located at the 30S-50S ribosomal subunit interface and may play a role in the structure and function of the aminoacyl-tRNA binding site. This is Large ribosomal subunit protein bL19 from Synechococcus sp. (strain CC9902).